A 130-amino-acid chain; its full sequence is Iron-sulfur cluster insertion protein ErpA (130 aa).

Iron-sulfur cluster contacts are provided by Cys58, Cys122, and Cys124.

It belongs to the HesB/IscA family. In terms of assembly, homodimer. It depends on iron-sulfur cluster as a cofactor.

Functionally, required for insertion of 4Fe-4S clusters for at least IspG. This chain is Iron-sulfur cluster insertion protein ErpA, found in Stenotrophomonas maltophilia (strain R551-3).